The following is a 437-amino-acid chain: Glutamyl-tRNA reductase (437 aa).

Residues 49–52 (TCNR), Ser109, 114–116 (EGQ), and Gln120 each bind substrate. The active-site Nucleophile is Cys50. 198-203 (GAGRMS) is an NADP(+) binding site.

Belongs to the glutamyl-tRNA reductase family. As to quaternary structure, homodimer.

The catalysed reaction is (S)-4-amino-5-oxopentanoate + tRNA(Glu) + NADP(+) = L-glutamyl-tRNA(Glu) + NADPH + H(+). Its pathway is porphyrin-containing compound metabolism; protoporphyrin-IX biosynthesis; 5-aminolevulinate from L-glutamyl-tRNA(Glu): step 1/2. The protein operates within porphyrin-containing compound metabolism; chlorophyll biosynthesis. Its function is as follows. Catalyzes the NADPH-dependent reduction of glutamyl-tRNA(Glu) to glutamate 1-semialdehyde (GSA). This is Glutamyl-tRNA reductase from Prochlorococcus marinus (strain SARG / CCMP1375 / SS120).